The chain runs to 348 residues: Abnormal cell lineage protein 44 (348 aa).

A signal peptide spans 1-25; that stretch reads MRAAPFDFFFQSTALSTFFILCSLA. 11 disulfides stabilise this stretch: Cys91–Cys102, Cys141–Cys149, Cys151–Cys165, Cys213–Cys227, Cys215–Cys222, Cys272–Cys299, Cys282–Cys294, Cys298–Cys338, Cys314–Cys329, Cys316–Cys326, and Cys321–Cys322. Ser219 carries the O-palmitoleoyl serine; by mom-1 lipid modification. N-linked (GlcNAc...) asparagine glycosylation occurs at Asn286.

This sequence belongs to the Wnt family. Post-translationally, palmitoleoylation is required for efficient binding to frizzled receptors. Depalmitoleoylation leads to Wnt signaling pathway inhibition. As to expression, expressed in the tail hypodermis.

It is found in the secreted. Its subcellular location is the extracellular space. The protein localises to the extracellular matrix. In terms of biological role, ligand for members of the frizzled family of seven transmembrane receptors. Affects male tail development, vulval precursor cell specification and egg laying. Involved in morphogenesis by influencing polarity of asymmetric cell divisions of the B, U, and F cells in the male, and the T cell in males and hermaphrodites. Controls spindle orientation in B-gamma cell division during male copulatory spicule development. Involved in specification of the P7.p lineage during vulval development. Has a role in providing polarity and default lin-17 localization in axon development and positioning of neuromuscular synapses in DA9 regions by negatively regulating synaptogenesis. Plays a role in motorneuron development by promoting the extension of the anterior neurite of ventral D-type GABAergic motorneurons along the anterior-posterior axis of the ventral nerve cord. Positively regulates cilium position and dendrite morphogenesis in postembryonic PQR gas-sensing neurons. This is likely through regulating the localization of grdn-1 to the distal dendrites of PQR sensory neurons. This is Abnormal cell lineage protein 44 from Caenorhabditis elegans.